Reading from the N-terminus, the 494-residue chain is Subtilisin-like serine protease EN45_078720 (494 aa).

The N-terminal stretch at 1–16 (MKGFLSLTLLPLLVAA) is a signal peptide. Positions 17–136 (SPVAVNSIHN…IEKDSEVRTM (120 aa)) are cleaved as a propeptide — removed in mature form. Residues 43–136 (SYIVVFKKHV…IEKDSEVRTM (94 aa)) form the Inhibitor I9 domain. In terms of domain architecture, Peptidase S8 spans 146 to 448 (PWGLARISHR…GGSANYTKIL (303 aa)). 2 igE-binding regions span residues 180–198 (VIDT…RANW) and 209–231 (EDGN…GVAK). Residues D182 and H214 each act as charge relay system in the active site. N-linked (GlcNAc...) asparagine glycosylation is found at N244 and N280. The Charge relay system role is filled by S376. N-linked (GlcNAc...) asparagine glycosylation occurs at N443. Residues 454-494 (KAHNAETTVEDRIGGIIDSAEKAFHKELGAIYSEIKDAVSA) constitute a propeptide, removed in mature form.

It belongs to the peptidase S8 family.

Its function is as follows. Serine protease. In Penicillium chrysogenum (Penicillium notatum), this protein is Subtilisin-like serine protease EN45_078720.